A 70-amino-acid chain; its full sequence is Cecropin-P1 (70 aa).

Positions 1–13 (MFLIYLFVQTAES) are cleaved as a signal peptide. A propeptide spans 45–70 (RRRFVAEQDAIHSRVSREVPTLSDSV) (removed in mature form).

As to expression, expressed in the body wall, intestine, uterus and ovary.

The protein resides in the secreted. Its function is as follows. Has antibacterial activity against several Gram-positive and Gram-negative bacteria. Is weakly active against yeasts. Acts by a nonpore mechanism. This chain is Cecropin-P1 (ASCEC-1), found in Ascaris suum (Pig roundworm).